The sequence spans 346 residues: uncharacterized protein (346 aa).

The protein belongs to the PhyH family.

The protein resides in the cytoplasm. This is an uncharacterized protein from Saccharomyces cerevisiae (strain ATCC 204508 / S288c) (Baker's yeast).